Consider the following 787-residue polypeptide: Mitochondrial intermediate peptidase (787 aa).

A mitochondrion-targeting transit peptide spans 1–36 (MQNKVLRGILFKNVPLGYSYNRSIRHPTFGNSIIRW). Residue His573 coordinates Zn(2+). Residue Glu574 is part of the active site. Positions 577 and 580 each coordinate Zn(2+).

The protein belongs to the peptidase M3 family. It depends on Zn(2+) as a cofactor.

It is found in the mitochondrion matrix. The enzyme catalyses Release of an N-terminal octapeptide as second stage of processing of some proteins imported into the mitochondrion.. Its function is as follows. Cleaves proteins, imported into the mitochondrion, to their mature size. While most mitochondrial precursor proteins are processed to the mature form in one step by mitochondrial processing peptidase (MPP), the sequential cleavage by MIP of an octapeptide after initial processing by MPP is a required step for a subgroup of nuclear-encoded precursor proteins destined for the matrix or the inner membrane. This Vanderwaltozyma polyspora (strain ATCC 22028 / DSM 70294 / BCRC 21397 / CBS 2163 / NBRC 10782 / NRRL Y-8283 / UCD 57-17) (Kluyveromyces polysporus) protein is Mitochondrial intermediate peptidase (OCT1).